The chain runs to 632 residues: 1-deoxy-D-xylulose-5-phosphate synthase (632 aa).

The segment at Met-1–Asp-25 is disordered. Thiamine diphosphate is bound by residues His-87 and Gly-128–Ser-130. Mg(2+) is bound at residue Asp-159. Residues Gly-160–Ala-161, Asn-188, Phe-295, and Glu-378 each bind thiamine diphosphate. Residue Asn-188 coordinates Mg(2+).

It belongs to the transketolase family. DXPS subfamily. As to quaternary structure, homodimer. The cofactor is Mg(2+). Thiamine diphosphate is required as a cofactor.

It carries out the reaction D-glyceraldehyde 3-phosphate + pyruvate + H(+) = 1-deoxy-D-xylulose 5-phosphate + CO2. Its pathway is metabolic intermediate biosynthesis; 1-deoxy-D-xylulose 5-phosphate biosynthesis; 1-deoxy-D-xylulose 5-phosphate from D-glyceraldehyde 3-phosphate and pyruvate: step 1/1. In terms of biological role, catalyzes the acyloin condensation reaction between C atoms 2 and 3 of pyruvate and glyceraldehyde 3-phosphate to yield 1-deoxy-D-xylulose-5-phosphate (DXP). The sequence is that of 1-deoxy-D-xylulose-5-phosphate synthase from Pseudomonas fluorescens (strain Pf0-1).